A 1041-amino-acid polypeptide reads, in one-letter code: Putative transcription elongation factor SPT5 homolog 1 (1041 aa).

The interval 1–133 is disordered; sequence MPRSRDEDDE…ERGDRRYERR (133 aa). 3 stretches are compositionally biased toward acidic residues: residues 7-32, 53-69, and 99-114; these read EDDE…EEEE, DYAE…DEDY, and DDED…DDFI. Phosphoserine is present on serine 59. The segment covering 122-133 has biased composition (basic and acidic residues); it reads PDERGDRRYERR. KOW domains follow at residues 273–300, 425–452, 477–504, and 601–628; these read DLSR…VDNV, HFMK…VDEE, YFEP…VDQH, and VIAV…IYKG. 2 disordered regions span residues 662–713 and 768–921; these read NRNG…GDDS and DTSR…GTGL. Positions 691–703 are enriched in gly residues; sequence GRGGGYNNSGGRH. Residues 712 to 739 enclose the KOW 5 domain; the sequence is DSLLGTTVKIRLGPFKGYRGPVVEVKGN. Basic and acidic residues predominate over residues 804-814; the sequence is DGMRTPMRDRA. Composition is skewed to polar residues over residues 835-844 and 893-904; these read SWGTSPQYQP and TPGQPMTPSSAS. A KOW 6 domain is found at 988 to 1015; sequence PPRKSDRVKIVGGQYRGSTGKLIGIDGS.

This sequence belongs to the SPT5 family.

The protein localises to the nucleus. In terms of biological role, may regulate transcription elongation by RNA polymerase II. May enhance transcriptional pausing at sites proximal to the promoter, which may in turn facilitate the assembly of an elongation competent RNA polymerase II complex. The polypeptide is Putative transcription elongation factor SPT5 homolog 1 (Arabidopsis thaliana (Mouse-ear cress)).